The sequence spans 173 residues: Protein-export protein SecB (173 aa).

A disordered region spans residues 148 to 173 (QQQKQRREQGTSDSAPSGSPDNGGRQ). Over residues 158 to 167 (TSDSAPSGSP) the composition is skewed to polar residues.

Belongs to the SecB family. In terms of assembly, homotetramer, a dimer of dimers. One homotetramer interacts with 1 SecA dimer.

Its subcellular location is the cytoplasm. In terms of biological role, one of the proteins required for the normal export of preproteins out of the cell cytoplasm. It is a molecular chaperone that binds to a subset of precursor proteins, maintaining them in a translocation-competent state. It also specifically binds to its receptor SecA. The polypeptide is Protein-export protein SecB (Halorhodospira halophila (strain DSM 244 / SL1) (Ectothiorhodospira halophila (strain DSM 244 / SL1))).